Here is a 60-residue protein sequence, read N- to C-terminus: Large ribosomal subunit protein uL30 (60 aa).

The protein belongs to the universal ribosomal protein uL30 family. In terms of assembly, part of the 50S ribosomal subunit.

The polypeptide is Large ribosomal subunit protein uL30 (Cupriavidus necator (strain ATCC 17699 / DSM 428 / KCTC 22496 / NCIMB 10442 / H16 / Stanier 337) (Ralstonia eutropha)).